Consider the following 358-residue polypeptide: Chitin synthase export chaperone (358 aa).

The next 7 helical transmembrane spans lie at 49-69 (IIFQ…TVVM), 88-108 (FFYL…GVIP), 117-137 (FVAV…INGF), 159-179 (FVAF…WAGL), 185-205 (VGIF…YVVM), 220-240 (LGDI…LYAF), and 250-270 (HYLD…MMVY). Positions 321–358 (ASGPGTGSGASASGYEGGHHRRESHGYTPSPNRQSLRY) are disordered. Polar residues predominate over residues 347–358 (YTPSPNRQSLRY).

The protein belongs to the CHS7 family. Interacts with chs-3.

The protein resides in the endoplasmic reticulum membrane. Functionally, chaperone required for the export of the chitin synthase chs-3 from the endoplasmic reticulum. In Neurospora crassa (strain ATCC 24698 / 74-OR23-1A / CBS 708.71 / DSM 1257 / FGSC 987), this protein is Chitin synthase export chaperone (csc-1).